The following is a 64-amino-acid chain: Large ribosomal subunit protein bL32 (64 aa).

Residues 1-10 (MAVPKRKTTP) show a composition bias toward basic residues. A disordered region spans residues 1 to 22 (MAVPKRKTTPSKRDMRRANHDK). Positions 11–22 (SKRDMRRANHDK) are enriched in basic and acidic residues.

The protein belongs to the bacterial ribosomal protein bL32 family.

The chain is Large ribosomal subunit protein bL32 from Sorangium cellulosum (strain So ce56) (Polyangium cellulosum (strain So ce56)).